We begin with the raw amino-acid sequence, 156 residues long: Putative pre-16S rRNA nuclease (156 aa).

It belongs to the YqgF nuclease family.

The protein localises to the cytoplasm. Its function is as follows. Could be a nuclease involved in processing of the 5'-end of pre-16S rRNA. The polypeptide is Putative pre-16S rRNA nuclease (Nocardioides sp. (strain ATCC BAA-499 / JS614)).